Here is a 37-residue protein sequence, read N- to C-terminus: Large ribosomal subunit protein bL36 (37 aa).

It belongs to the bacterial ribosomal protein bL36 family.

The sequence is that of Large ribosomal subunit protein bL36 from Staphylococcus carnosus (strain TM300).